Here is a 280-residue protein sequence, read N- to C-terminus: Tryptophan synthase alpha chain (280 aa).

Active-site proton acceptor residues include Glu-49 and Asp-60.

This sequence belongs to the TrpA family. In terms of assembly, tetramer of two alpha and two beta chains.

The enzyme catalyses (1S,2R)-1-C-(indol-3-yl)glycerol 3-phosphate + L-serine = D-glyceraldehyde 3-phosphate + L-tryptophan + H2O. The protein operates within amino-acid biosynthesis; L-tryptophan biosynthesis; L-tryptophan from chorismate: step 5/5. Functionally, the alpha subunit is responsible for the aldol cleavage of indoleglycerol phosphate to indole and glyceraldehyde 3-phosphate. The polypeptide is Tryptophan synthase alpha chain (Corynebacterium glutamicum (strain ATCC 13032 / DSM 20300 / JCM 1318 / BCRC 11384 / CCUG 27702 / LMG 3730 / NBRC 12168 / NCIMB 10025 / NRRL B-2784 / 534)).